The primary structure comprises 275 residues: MIHFTKMHGLGNDFMVVDGVTQNVFFSPEQIRRLADRNFGIGFDQLLLVEPPYDPDLDFHYRIFNADGSEVEQCGNGARCFARFVRNKGLTQKNKIRVSTNSGKITLRIERDGNVTVNMGVPVIEPSQIPFKAKKSEKTYLLQTPMQTYLCGAISMGNPHCVIQVEDVQTVNVDEIGSSLTRHERFPKGVNVGFMQVINPGHIKLRVYERGAAETLACGTGACAAAAVGQLQDKLDKQVRVDLPGGSLIINWEGEGKPLWMTGPAEHVYDGQIQL.

Positions 12, 45, and 65 each coordinate substrate. Cys74 acts as the Proton donor in catalysis. Residues 75–76 (GN), Asn158, Asn191, and 209–210 (ER) contribute to the substrate site. Cys218 acts as the Proton acceptor in catalysis. A substrate-binding site is contributed by 219–220 (GT).

It belongs to the diaminopimelate epimerase family. As to quaternary structure, homodimer.

The protein resides in the cytoplasm. The enzyme catalyses (2S,6S)-2,6-diaminopimelate = meso-2,6-diaminopimelate. It participates in amino-acid biosynthesis; L-lysine biosynthesis via DAP pathway; DL-2,6-diaminopimelate from LL-2,6-diaminopimelate: step 1/1. Functionally, catalyzes the stereoinversion of LL-2,6-diaminopimelate (L,L-DAP) to meso-diaminopimelate (meso-DAP), a precursor of L-lysine and an essential component of the bacterial peptidoglycan. The polypeptide is Diaminopimelate epimerase (Shewanella frigidimarina (strain NCIMB 400)).